The primary structure comprises 120 residues: Fumarate reductase subunit D (120 aa).

3 helical membrane-spanning segments follow: residues 25 to 45 (FAMLTPVTILVLGIMVPLGIL), 57 to 77 (GFVTSFIGALFTIATLALPMW), and 100 to 120 (IACYATAFLVSALAIIFVFMI).

Belongs to the FrdD family. Part of an enzyme complex containing four subunits: a flavoprotein (FrdA), an iron-sulfur protein (FrdB), and two hydrophobic anchor proteins (FrdC and FrdD).

The protein resides in the cell inner membrane. Anchors the catalytic components of the fumarate reductase complex to the cell membrane, binds quinones. The polypeptide is Fumarate reductase subunit D (Photobacterium profundum (strain SS9)).